A 313-amino-acid polypeptide reads, in one-letter code: PDCD10 and GCKIII kinases-associated protein 1 (313 aa).

Positions 42-95 are disordered; sequence KGTQNSEVEVPGSTLHSGSLSKPDSSGSTTGLPCQGSLTQEDSEERPCVEKHGI. The span at 58-69 shows a compositional bias: low complexity; it reads SGSLSKPDSSGS. Residue Ser-60 is modified to Phosphoserine. Residues 70-81 are compositionally biased toward polar residues; it reads TTGLPCQGSLTQ. The residue at position 104 (Thr-104) is a Phosphothreonine. Phosphoserine occurs at positions 107, 237, and 240. Residues 253-288 are disordered; sequence YFKEEDPTQPTPVADPGNEREDPHTYNGNKEGAVVD.

As to quaternary structure, interacts with KEAP1; this interaction prevents the ubiquitination of KEAP1 by TRIM25, thus protecting KEAP1 from degradation. Found in association with PDCD10 and members of the STE20 kinases, such as STK24, STK25, and STK26.

Its subcellular location is the cell membrane. Its function is as follows. Acts as a tumor suppressor. Acts as a tumor suppressor for colorectal cancer cell proliferation by targeting KEAP1/USP17/ELK1/CDK6 axis. This is PDCD10 and GCKIII kinases-associated protein 1 from Rattus norvegicus (Rat).